Here is a 309-residue protein sequence, read N- to C-terminus: Spermatid maturation protein 1 (309 aa).

A helical transmembrane segment spans residues 29–49; sequence VLLLLGLIICINISINIVTLL. A disordered region spans residues 209 to 231; the sequence is PPPPSPEAPSHKNGGEGAVPEAE. Residues 259–285 adopt a coiled-coil conformation; sequence RIVYDARDMRRRLRELTREVEALSGCY.

It is found in the membrane. It localises to the cytoplasm. Its function is as follows. Required for proper cytoplasm removal during spermatogenesis. The polypeptide is Spermatid maturation protein 1 (SPEM1) (Homo sapiens (Human)).